Reading from the N-terminus, the 490-residue chain is MVPVVALVGRPNVGKSTLFNRLTRTRDALVADFPGLTRDRKYGRAEVEGREFICIDTGGIDGTEDGVETRMAEQSLLAIEEADVVLFMVDARAGLMPADEAIAKHLRSREKPTFLVANKTDGLDPDQAVVDFYSLGLGEIYPIAASHGRGVLSLLEHVLLPWMDDVAPQEEVDEDAEYWAQFEAEQNGEEAPEDDFDPQSLPIKLAIVGRPNVGKSTLTNRILGEERVVVYDMPGTTRDSIYIPMERDEREYVLIDTAGVRKRGKITDAVEKFSVIKTLQAIEDANVVLLVIDAREGISDQDLSLLGFILNSGRSLVIVVNKWDGLSQEVKEQVKETLDFRLGFIDFARVHFISALHGSGVGNLFESVREAYDSSTRRVSTAMLTRIMTMAVEDHQPPLVRGRRVKLKYAHAGGYNPPIVVIHGNQVKDLPDSYKRYLMNYFRKSLEVMGTPIRIQFKEGENPYANKRNTLTPTQMRKRKRLMKHIKKSK.

EngA-type G domains are found at residues 3-166 (PVVA…MDDV) and 203-376 (IKLA…DSST). GTP is bound by residues 9–16 (GRPNVGKS), 56–60 (DTGGI), 118–121 (NKTD), 209–216 (GRPNVGKS), 256–260 (DTAGV), and 321–324 (NKWD). A KH-like domain is found at 377–461 (RRVSTAMLTR…PIRIQFKEGE (85 aa)).

It belongs to the TRAFAC class TrmE-Era-EngA-EngB-Septin-like GTPase superfamily. EngA (Der) GTPase family. In terms of assembly, associates with the 50S ribosomal subunit.

Its function is as follows. GTPase that plays an essential role in the late steps of ribosome biogenesis. The protein is GTPase Der of Salmonella newport (strain SL254).